The primary structure comprises 274 residues: Dermonecrotic toxin LspiSicTox-betaIII2 (274 aa).

H5 is an active-site residue. Residues E25 and D27 each contribute to the Mg(2+) site. H41 acts as the Nucleophile in catalysis. 2 disulfide bridges follow: C45/C51 and C47/C189. D85 contacts Mg(2+).

Belongs to the arthropod phospholipase D family. Class II subfamily. Requires Mg(2+) as cofactor. As to expression, expressed by the venom gland.

The protein resides in the secreted. The catalysed reaction is an N-(acyl)-sphingosylphosphocholine = an N-(acyl)-sphingosyl-1,3-cyclic phosphate + choline. The enzyme catalyses an N-(acyl)-sphingosylphosphoethanolamine = an N-(acyl)-sphingosyl-1,3-cyclic phosphate + ethanolamine. It catalyses the reaction a 1-acyl-sn-glycero-3-phosphocholine = a 1-acyl-sn-glycero-2,3-cyclic phosphate + choline. It carries out the reaction a 1-acyl-sn-glycero-3-phosphoethanolamine = a 1-acyl-sn-glycero-2,3-cyclic phosphate + ethanolamine. In terms of biological role, dermonecrotic toxins cleave the phosphodiester linkage between the phosphate and headgroup of certain phospholipids (sphingolipid and lysolipid substrates), forming an alcohol (often choline) and a cyclic phosphate. This toxin acts on sphingomyelin (SM). It may also act on ceramide phosphoethanolamine (CPE), lysophosphatidylcholine (LPC) and lysophosphatidylethanolamine (LPE), but not on lysophosphatidylserine (LPS), and lysophosphatidylglycerol (LPG). It acts by transphosphatidylation, releasing exclusively cyclic phosphate products as second products. Induces dermonecrosis, hemolysis, increased vascular permeability, edema, inflammatory response, and platelet aggregation. The polypeptide is Dermonecrotic toxin LspiSicTox-betaIII2 (Loxosceles spinulosa (Recluse spider)).